Reading from the N-terminus, the 565-residue chain is Liver carboxylesterase 1 (565 aa).

An N-terminal signal peptide occupies residues 1-18 (MWLCALSLISLTACLSLG). Cys-87 and Cys-116 are joined by a disulfide. Ser-221 (acyl-ester intermediate) is an active-site residue. The cysteines at positions 273 and 284 are disulfide-linked. The active-site Charge relay system is Glu-353. Ser-378 is modified (phosphoserine). N-linked (GlcNAc...) asparagine glycosylation occurs at Asn-388. Residue His-466 is the Charge relay system of the active site. A glycan (N-linked (GlcNAc...) asparagine) is linked at Asn-489.

Belongs to the type-B carboxylesterase/lipase family. As to quaternary structure, homotrimer and homohexamer. Binds to beta-glucuronidase. Detected in kidney, liver and lung.

It localises to the endoplasmic reticulum lumen. The protein resides in the cytoplasm. Its subcellular location is the lipid droplet. It catalyses the reaction a carboxylic ester + H2O = an alcohol + a carboxylate + H(+). The catalysed reaction is cholesteryl (9Z-octadecenoate) + H2O = cholesterol + (9Z)-octadecenoate + H(+). The enzyme catalyses 2-(5Z,8Z,11Z,14Z-eicosatetraenoyl)-glycerol + H2O = glycerol + (5Z,8Z,11Z,14Z)-eicosatetraenoate + H(+). It carries out the reaction prostaglandin E2 1-glyceryl ester + H2O = prostaglandin E2 + glycerol + H(+). It catalyses the reaction a cholesterol ester + H2O = cholesterol + a fatty acid + H(+). The catalysed reaction is prostaglandin F2alpha 1-glyceryl ester + H2O = prostaglandin F2alpha + glycerol + H(+). In terms of biological role, involved in the detoxification of xenobiotics and in the activation of ester and amide prodrugs. Hydrolyzes aromatic and aliphatic esters, but has no catalytic activity toward amides or a fatty acyl-CoA ester. Displays fatty acid ethyl ester synthase activity, catalyzing the ethyl esterification of oleic acid to ethyloleate. Converts monoacylglycerides to free fatty acids and glycerol. Hydrolyzes of 2-arachidonoylglycerol and prostaglandins. Hydrolyzes cellular cholesteryl esters to free cholesterols and promotes reverse cholesterol transport (RCT) by facilitating both the initial and final steps in the process. First of all, allows free cholesterol efflux from macrophages to extracellular cholesterol acceptors and secondly, releases free cholesterol from lipoprotein-delivered cholesteryl esters in the liver for bile acid synthesis or direct secretion into the bile. The chain is Liver carboxylesterase 1 from Mus musculus (Mouse).